The chain runs to 346 residues: Zinc-type alcohol dehydrogenase-like protein C1773.06c (346 aa).

The protein belongs to the zinc-containing alcohol dehydrogenase family. Quinone oxidoreductase subfamily.

The protein localises to the cytoplasm. This chain is Zinc-type alcohol dehydrogenase-like protein C1773.06c, found in Schizosaccharomyces pombe (strain 972 / ATCC 24843) (Fission yeast).